The chain runs to 446 residues: MAFEGLADRLQQTISKIRGKGKVSEQDVKEMMREVRLALLEADVNFKVVKDFVKKVSERAVGQDVMKSLTPGQQVIKVVQEELTELMGGEESKIAVAKRPPTVIMMVGLQGAGKTTTSGKLANLLRKKHNRKPMLVAADIYRPAAIKQLETLGKQLDMPVFSLGDQVSPVEIAKQAIEKAKEEHYDYVILDTAGRLHIDHELMDELTNVKEIANPEEIFLVVDSMTGQDAVNVAKSFNEQLGLTGVVLTKLDGDTRGGAALSIRAVTNTPIKFAGLGEKLDALEPFHPERMASRILGMGDVLTLIEKAQASVDEDKAKELEQKMRTMSFTLDDFLEQLGQVRNMGPLDELLQMMPGAGKMKGLKNIQVDEKQLNHVEAIIKSMTVLEKEQPDIINASRRKRIAKGSGTSVQEVNRLLKQFDEMKKMMKQMTNMSKGKKKGFKLPFM.

GTP-binding positions include 108-115 (GLQGAGKT), 191-195 (DTAGR), and 249-252 (TKLD).

This sequence belongs to the GTP-binding SRP family. SRP54 subfamily. Part of the signal recognition particle protein translocation system, which is composed of SRP and FtsY. Interacts with a small cytoplasmic RNA (sc-RNA).

The protein resides in the cytoplasm. It catalyses the reaction GTP + H2O = GDP + phosphate + H(+). Involved in targeting and insertion of nascent membrane proteins into the cytoplasmic membrane. Binds to the hydrophobic signal sequence of the ribosome-nascent chain (RNC) as it emerges from the ribosomes. The SRP-RNC complex is then targeted to the cytoplasmic membrane where it interacts with the SRP receptor FtsY. Interaction with FtsY leads to the transfer of the RNC complex to the Sec translocase for insertion into the membrane, the hydrolysis of GTP by both Ffh and FtsY, and the dissociation of the SRP-FtsY complex into the individual components. The chain is Signal recognition particle protein from Bacillus subtilis (strain 168).